Here is a 201-residue protein sequence, read N- to C-terminus: GTP cyclohydrolase 1 (201 aa).

Zn(2+) is bound by residues C90, H93, and C163.

The protein belongs to the GTP cyclohydrolase I family. As to quaternary structure, homomer.

It catalyses the reaction GTP + H2O = 7,8-dihydroneopterin 3'-triphosphate + formate + H(+). It participates in cofactor biosynthesis; 7,8-dihydroneopterin triphosphate biosynthesis; 7,8-dihydroneopterin triphosphate from GTP: step 1/1. The sequence is that of GTP cyclohydrolase 1 from Streptomyces griseus subsp. griseus (strain JCM 4626 / CBS 651.72 / NBRC 13350 / KCC S-0626 / ISP 5235).